The sequence spans 315 residues: Mitochondrial glutamate carrier 2 (315 aa).

Solcar repeat units follow at residues Leu6–Leu92, Arg100–Leu210, and Ala219–Glu308. The next 3 helical transmembrane spans lie at Leu12–Ala32, Phe61–Ile81, and Met106–Leu126. The disordered stretch occupies residues Gln141–Thr160. The span at Gly142 to Ser159 shows a compositional bias: polar residues. The residue at position 145 (Ser145) is a Phosphoserine. 3 consecutive transmembrane segments (helical) span residues Gly185–Ala205, Phe225–Leu245, and Ala288–Glu308.

This sequence belongs to the mitochondrial carrier (TC 2.A.29) family. In terms of tissue distribution, expressed in brain, to a lesser extent in testis, and poorly in all the other tissues.

It is found in the mitochondrion inner membrane. The catalysed reaction is L-glutamate(in) + H(+)(in) = L-glutamate(out) + H(+)(out). In terms of biological role, responsible for the transport of glutamate from the cytosol into the mitochondrial matrix with the concomitant import of a proton (symport system). The sequence is that of Mitochondrial glutamate carrier 2 from Homo sapiens (Human).